Here is a 137-residue protein sequence, read N- to C-terminus: Protein PsiE homolog (137 aa).

The next 4 helical transmembrane spans lie at I13–I35, Y55–Y77, F84–V103, and S107–N129.

It belongs to the PsiE family.

It is found in the cell membrane. The protein is Protein PsiE homolog of Listeria monocytogenes serotype 4b (strain F2365).